Consider the following 91-residue polypeptide: HssA/B-like protein 24 (91 aa).

It belongs to the hssA/B family.

The chain is HssA/B-like protein 24 (hssl24) from Dictyostelium discoideum (Social amoeba).